The following is a 299-amino-acid chain: Putative S-adenosyl-L-methionine-dependent methyltransferase MAB_0027c (299 aa).

S-adenosyl-L-methionine-binding positions include Asp-126 and 155-156; that span reads DL.

The protein belongs to the UPF0677 family.

Exhibits S-adenosyl-L-methionine-dependent methyltransferase activity. In Mycobacteroides abscessus (strain ATCC 19977 / DSM 44196 / CCUG 20993 / CIP 104536 / JCM 13569 / NCTC 13031 / TMC 1543 / L948) (Mycobacterium abscessus), this protein is Putative S-adenosyl-L-methionine-dependent methyltransferase MAB_0027c.